The primary structure comprises 208 residues: FMN-dependent NADH:quinone oxidoreductase 1 (208 aa).

This sequence belongs to the azoreductase type 1 family. As to quaternary structure, homodimer. The cofactor is FMN.

It carries out the reaction 2 a quinone + NADH + H(+) = 2 a 1,4-benzosemiquinone + NAD(+). The catalysed reaction is N,N-dimethyl-1,4-phenylenediamine + anthranilate + 2 NAD(+) = 2-(4-dimethylaminophenyl)diazenylbenzoate + 2 NADH + 2 H(+). Quinone reductase that provides resistance to thiol-specific stress caused by electrophilic quinones. Functionally, also exhibits azoreductase activity. Catalyzes the reductive cleavage of the azo bond in aromatic azo compounds to the corresponding amines. This chain is FMN-dependent NADH:quinone oxidoreductase 1, found in Bacillus thuringiensis subsp. konkukian (strain 97-27).